The chain runs to 98 residues: Citrate lyase acyl carrier protein (98 aa).

An O-(phosphoribosyl dephospho-coenzyme A)serine modification is found at serine 14.

This sequence belongs to the CitD family. As to quaternary structure, oligomer with a subunit composition of (alpha,beta,gamma)6.

Its subcellular location is the cytoplasm. Covalent carrier of the coenzyme of citrate lyase. The chain is Citrate lyase acyl carrier protein from Citrobacter koseri (strain ATCC BAA-895 / CDC 4225-83 / SGSC4696).